Here is a 422-residue protein sequence, read N- to C-terminus: Inhibitor of growth protein 1 (422 aa).

Residues 261 to 349 are disordered; it reads ELGDTAGNSG…EASPADLPID (89 aa). Lys278 participates in a covalent cross-link: Glycyl lysine isopeptide (Lys-Gly) (interchain with G-Cter in SUMO2). A compositionally biased stretch (basic and acidic residues) spans 297–314; the sequence is RNNENRENASSNHDHDDG. A compositionally biased stretch (basic residues) spans 322–334; that stretch reads KKAKTSKKKKRSK. A PHD-type zinc finger spans residues 353–402; that stretch reads PTYCLCNQVSYGEMIGCDNDECPIEWFHFSCVGLNHKPKGKWYCPKCRGE. Zn(2+)-binding residues include Cys356, Cys358, Cys369, Cys374, His380, Cys383, Cys396, and Cys399. The PBR stretch occupies residues 405–422; it reads KTMDKALEKSKKERAYNR.

It belongs to the ING family. As to quaternary structure, interacts with H3K4me3 and to a lesser extent with H3K4me2. Interacts with TP53. Isoform 2 interacts with RSL1D1. Isoform 2 was expressed in all normal tissues and cells examined, as well as in all breast cancer and melanoma cell lines examined. Isoform 3 was expressed in testis, liver, and kidney, weakly expressed in colon and brain and not expressed in breast and cultured melanocytes. Isoform 4 was highly expressed in testis and weakly expressed in brain, but not expressed in breast, colon, kidney, melanocytes, breast cancer or melanoma cell lines.

It localises to the nucleus. Its function is as follows. Cooperates with p53/TP53 in the negative regulatory pathway of cell growth by modulating p53-dependent transcriptional activation. Implicated as a tumor suppressor gene. The polypeptide is Inhibitor of growth protein 1 (ING1) (Homo sapiens (Human)).